We begin with the raw amino-acid sequence, 187 residues long: GTP cyclohydrolase 1 (187 aa).

Zn(2+) is bound by residues cysteine 76, histidine 79, and cysteine 148.

This sequence belongs to the GTP cyclohydrolase I family. Toroid-shaped homodecamer, composed of two pentamers of five dimers.

The enzyme catalyses GTP + H2O = 7,8-dihydroneopterin 3'-triphosphate + formate + H(+). The protein operates within cofactor biosynthesis; 7,8-dihydroneopterin triphosphate biosynthesis; 7,8-dihydroneopterin triphosphate from GTP: step 1/1. This Streptococcus agalactiae serotype III (strain NEM316) protein is GTP cyclohydrolase 1.